Reading from the N-terminus, the 633-residue chain is Guanylate-binding protein 6 (633 aa).

Residues 1–310 are GTPase domain (Globular); it reads MESGPKMLAP…EAINSGAVPC (310 aa). In terms of domain architecture, GB1/RHD3-type G spans 35–277; that stretch reads SQPVVVVAIV…FCSYIFTHAR (243 aa). GTP contacts are provided by residues 45–52, 67–69, and 97–101; these read GLYRTGKS, LGS, and DTEGL.

This sequence belongs to the TRAFAC class dynamin-like GTPase superfamily. GB1/RHD3 GTPase family. GB1 subfamily. (Microbial infection) Ubiquitinated by S.flexneri IpaH9.8, leading to its degradation by the proteasome, thereby preventing its ability to promote host defense against bacterial infection.

The protein resides in the cytoplasmic vesicle. The enzyme catalyses GTP + H2O = GDP + phosphate + H(+). Its function is as follows. Interferon (IFN)-inducible GTPase that plays important roles in innate immunity against a diverse range of bacterial, viral and protozoan pathogens, such as bacterial pathogens Listeria monocytogenes and Mycobacterium bovis BCG as well as the protozoan pathogen Toxoplasma gondii. Confers protection to several pathogens, including the bacterial pathogens Listeria monocytogenes and Mycobacterium bovis BCG as well as the protozoan pathogen Toxoplasma gondii. The protein is Guanylate-binding protein 6 (GBP6) of Homo sapiens (Human).